Here is a 317-residue protein sequence, read N- to C-terminus: Methionyl-tRNA formyltransferase (317 aa).

117-120 (SLLP) serves as a coordination point for (6S)-5,6,7,8-tetrahydrofolate.

The protein belongs to the Fmt family.

It carries out the reaction L-methionyl-tRNA(fMet) + (6R)-10-formyltetrahydrofolate = N-formyl-L-methionyl-tRNA(fMet) + (6S)-5,6,7,8-tetrahydrofolate + H(+). Its function is as follows. Attaches a formyl group to the free amino group of methionyl-tRNA(fMet). The formyl group appears to play a dual role in the initiator identity of N-formylmethionyl-tRNA by promoting its recognition by IF2 and preventing the misappropriation of this tRNA by the elongation apparatus. The protein is Methionyl-tRNA formyltransferase of Herminiimonas arsenicoxydans.